We begin with the raw amino-acid sequence, 188 residues long: Acireductone dioxygenase (188 aa).

The Fe(2+) site is built by His-97, His-99, Glu-103, and His-141. Positions 97, 99, 103, and 141 each coordinate Ni(2+).

It belongs to the acireductone dioxygenase (ARD) family. Monomer. It depends on Fe(2+) as a cofactor. Ni(2+) is required as a cofactor.

It carries out the reaction 1,2-dihydroxy-5-(methylsulfanyl)pent-1-en-3-one + O2 = 3-(methylsulfanyl)propanoate + CO + formate + 2 H(+). The catalysed reaction is 1,2-dihydroxy-5-(methylsulfanyl)pent-1-en-3-one + O2 = 4-methylsulfanyl-2-oxobutanoate + formate + 2 H(+). It functions in the pathway amino-acid biosynthesis; L-methionine biosynthesis via salvage pathway; L-methionine from S-methyl-5-thio-alpha-D-ribose 1-phosphate: step 5/6. Functionally, catalyzes 2 different reactions between oxygen and the acireductone 1,2-dihydroxy-3-keto-5-methylthiopentene (DHK-MTPene) depending upon the metal bound in the active site. Fe-containing acireductone dioxygenase (Fe-ARD) produces formate and 2-keto-4-methylthiobutyrate (KMTB), the alpha-ketoacid precursor of methionine in the methionine recycle pathway. Ni-containing acireductone dioxygenase (Ni-ARD) produces methylthiopropionate, carbon monoxide and formate, and does not lie on the methionine recycle pathway. The protein is Acireductone dioxygenase of Xylella fastidiosa (strain M23).